Here is a 98-residue protein sequence, read N- to C-terminus: uncharacterized protein (98 aa).

This is an uncharacterized protein from Invertebrate iridescent virus 6 (IIV-6).